Consider the following 555-residue polypeptide: Genome polyprotein (555 aa).

Residues 1 to 7 are Extracellular-facing; it reads KHAQRIE. Residues 8–28 traverse the membrane as a helical segment; the sequence is TWILRHPGFTIMAAILAYTIG. The Cytoplasmic portion of the chain corresponds to 29–34; sequence TTHFQR. A helical transmembrane segment spans residues 35-49; that stretch reads ALIFILLTAVAPSMT. The Extracellular segment spans residues 50–494; sequence MRCIGISNRD…LHQVFGAIYG (445 aa). 4 disulfides stabilise this stretch: cysteine 52-cysteine 79, cysteine 109-cysteine 170, cysteine 123-cysteine 154, and cysteine 141-cysteine 165. Asparagine 116 carries N-linked (GlcNAc...) asparagine; by host glycosylation. The interval 147–160 is fusion peptide; that stretch reads DRGWGNGCGLFGKG. Asparagine 202 carries N-linked (GlcNAc...) asparagine; by host glycosylation. 2 cysteine pairs are disulfide-bonded: cysteine 234-cysteine 334 and cysteine 351-cysteine 382. A helical membrane pass occupies residues 495–515; sequence AAFSGVSWTMKILIGVIITWI. Residues 516 to 521 are Cytoplasmic-facing; that stretch reads GMNSRS. The helical transmembrane segment at 522–542 threads the bilayer; the sequence is TSLSVSLVLVGIVTLYLEVMV. Over 543 to 555 the chain is Extracellular; sequence QADSGCVVSWKNK.

In terms of assembly, homodimer; in the endoplasmic reticulum and Golgi. Interacts with protein prM. Interacts with non-structural protein 1. Homodimer; Homohexamer when secreted. Interacts with envelope protein E. N-glycosylated. Post-translationally, N-glycosylated. The excreted form is glycosylated and this is required for efficient secretion of the protein from infected cells. In terms of processing, specific enzymatic cleavages in vivo yield mature proteins. Cleavages in the lumen of endoplasmic reticulum are performed by host signal peptidase, wereas cleavages in the cytoplasmic side are performed by serine protease NS3. Signal cleavage at the 2K-4B site requires a prior NS3 protease-mediated cleavage at the 4A-2K site.

It localises to the virion membrane. Its subcellular location is the host endoplasmic reticulum membrane. The protein resides in the secreted. In terms of biological role, may play a role in virus budding. Exerts cytotoxic effects by activating a mitochondrial apoptotic pathway through M ectodomain. May display a viroporin activity. Its function is as follows. Binds to host cell surface receptor and mediates fusion between viral and cellular membranes. Envelope protein is synthesized in the endoplasmic reticulum in the form of heterodimer with protein prM. They play a role in virion budding in the ER, and the newly formed immature particle is covered with 60 spikes composed of heterodimer between precursor prM and envelope protein E. The virion is transported to the Golgi apparatus where the low pH causes dissociation of PrM-E heterodimers and formation of E homodimers. prM-E cleavage is inefficient, and many virions are only partially matured. These uncleaved prM would play a role in immune evasion. Involved in immune evasion, pathogenesis and viral replication. Once cleaved off the polyprotein, is targeted to three destinations: the viral replication cycle, the plasma membrane and the extracellular compartment. Essential for viral replication. Required for formation of the replication complex and recruitment of other non-structural proteins to the ER-derived membrane structures. Excreted as a hexameric lipoparticle that plays a role against host immune response. Antagonizing the complement function. Binds to the host macrophages and dendritic cells. Inhibits signal transduction originating from Toll-like receptor 3 (TLR3). Functionally, disrupts the host endothelial glycocalyx layer of host pulmonary microvascular endothelial cells, inducing degradation of sialic acid and shedding of heparan sulfate proteoglycans. NS1 induces expression of sialidases, heparanase, and activates cathepsin L, which activates heparanase via enzymatic cleavage. These effects are probably linked to the endothelial hyperpermeability observed in severe dengue disease. The sequence is that of Genome polyprotein from Dengue virus type 2 (strain Thailand/TH-36/1958) (DENV-2).